Here is a 341-residue protein sequence, read N- to C-terminus: Arfaptin-2 (341 aa).

Residues 46–85 are disordered; it reads NETSIVSGGYGGSGDGLIPTGSGRHPSHSTTPSGPGDEVA. Serine 72 bears the Phosphoserine mark. Position 76 is a phosphothreonine (threonine 76). The AH domain maps to 121–321; it reads TVDLELELQI…NQKQLEQTLQ (201 aa).

In terms of assembly, forms homodimers or heterodimers with ARFIP1. Interacts with RAC1. Specifically binds to GTP-bound ARF1 and ARF6, but binds to RAC1.GTP and RAC1.GDP with similar affinities. Interacts with ARL1. Interacts (via N-terminus) with IKBKB and IKBKG; these interactions inhibit activation of NF-kappa-B.

It localises to the golgi apparatus. The protein resides in the trans-Golgi network membrane. Functionally, plays a role in constitutive metalloproteinase (MMP) secretion from the trans Golgi network. May have important functions during vesicle biogenesis at certain cargo subdomains, which could be predominantly utilized by secreted MMPs, such as MMP7 and MMP2. Also involved in autophagy by regulating the starvation-dependent trafficking of ATG9A vesicles which deliver the phosphatidylinositol 4-kinase beta (PI4KB) to the autophagosome initiation site. Involved in phagophore growth during mitophagy by regulating ATG9A trafficking to mitochondria. In addition, plays a role in NF-kappa-B inhibition by interacting with IKBKB and IKBKG. This chain is Arfaptin-2, found in Homo sapiens (Human).